We begin with the raw amino-acid sequence, 319 residues long: Putative peptide permease protein BRA0408/BS1330_II0405 (319 aa).

6 helical membrane-spanning segments follow: residues 9 to 29 (LLIG…LLQL), 102 to 122 (LLLM…TGII), 138 to 158 (LALL…LYVF), 182 to 202 (LLRH…ALIM), 242 to 262 (LPVV…AIFI), and 284 to 304 (YPVI…VNIL). An ABC transmembrane type-1 domain is found at 98 to 305 (IGPTLLLMAA…ACVIIVNILT (208 aa)).

This sequence belongs to the binding-protein-dependent transport system permease family. As to quaternary structure, the complex is composed of two ATP-binding proteins (BRA0404 and BRA0405), two transmembrane proteins (BRA0407 and BRA0408) and a solute-binding protein (BRA0409).

The protein localises to the cell inner membrane. In terms of biological role, probably part of an ABC transporter complex that could be involved in peptide import. Probably responsible for the translocation of the substrate across the membrane. The polypeptide is Putative peptide permease protein BRA0408/BS1330_II0405 (Brucella suis biovar 1 (strain 1330)).